Reading from the N-terminus, the 21-residue chain is Putative NADH dehydrogenase subunit PS9 (21 aa).

The polypeptide is Putative NADH dehydrogenase subunit PS9 (Pinus strobus (Eastern white pine)).